Here is a 118-residue protein sequence, read N- to C-terminus: Developmental pluripotency-associated protein 5A (118 aa).

Positions 24-86 (PEVFQVQSLV…NNKIRAKWML (63 aa)) constitute a KH; atypical domain.

This sequence belongs to the KHDC1 family.

It is found in the cytoplasm. In terms of biological role, involved in the maintenance of embryonic stem (ES) cell pluripotency. Dispensable for self-renewal of pluripotent ES cells and establishment of germ cells. Associates with specific target mRNAs. The polypeptide is Developmental pluripotency-associated protein 5A (Dppa5a) (Mus musculus (Mouse)).